We begin with the raw amino-acid sequence, 205 residues long: uncharacterized protein (205 aa).

The next 5 helical transmembrane spans lie at 5–25, 41–61, 68–88, 117–137, and 147–167; these read VWLA…SGTV, GAII…GIGI, SALA…WLGI, LINL…PQFI, and FLVL…GYTA.

The protein belongs to the Rht family.

It localises to the cell inner membrane. Involved in positive regulation of motility and negative regulation of biofilm formation. This is an uncharacterized protein from Vibrio cholerae serotype O1 (strain ATCC 39315 / El Tor Inaba N16961).